Consider the following 290-residue polypeptide: Taxis protein CheF1 (290 aa).

In terms of assembly, interacts with chemotaxis (Che) proteins as well as flagella accessory (Fla) proteins.

Its function is as follows. Involved in taxis signal transduction. Essential for the ability to control the direction of flagellar rotation. May have a role between CheY and the flagellum. The polypeptide is Taxis protein CheF1 (cheF1) (Halobacterium salinarum (strain ATCC 29341 / DSM 671 / R1)).